We begin with the raw amino-acid sequence, 355 residues long: Heat-inducible transcription repressor HrcA (355 aa).

The protein belongs to the HrcA family.

Functionally, negative regulator of class I heat shock genes (grpE-dnaK-dnaJ and groELS operons). Prevents heat-shock induction of these operons. The sequence is that of Heat-inducible transcription repressor HrcA from Nitratidesulfovibrio vulgaris (strain DSM 19637 / Miyazaki F) (Desulfovibrio vulgaris).